Reading from the N-terminus, the 184-residue chain is Ribosome-recycling factor (184 aa).

This sequence belongs to the RRF family.

The protein resides in the cytoplasm. Functionally, responsible for the release of ribosomes from messenger RNA at the termination of protein biosynthesis. May increase the efficiency of translation by recycling ribosomes from one round of translation to another. The sequence is that of Ribosome-recycling factor from Clostridium botulinum (strain Langeland / NCTC 10281 / Type F).